We begin with the raw amino-acid sequence, 104 residues long: Integration host factor subunit alpha (104 aa).

Belongs to the bacterial histone-like protein family. Heterodimer of an alpha and a beta chain.

In terms of biological role, this protein is one of the two subunits of integration host factor, a specific DNA-binding protein that functions in genetic recombination as well as in transcriptional and translational control. The polypeptide is Integration host factor subunit alpha (Methylobacterium sp. (strain 4-46)).